The chain runs to 249 residues: uncharacterized protein (249 aa).

Residues histidine 10, histidine 12, glutamate 95, histidine 129, histidine 150, and aspartate 198 each contribute to the a divalent metal cation site.

The protein belongs to the metallo-dependent hydrolases superfamily. TatD-type hydrolase family. It depends on a divalent metal cation as a cofactor.

This is an uncharacterized protein from Methanocaldococcus jannaschii (strain ATCC 43067 / DSM 2661 / JAL-1 / JCM 10045 / NBRC 100440) (Methanococcus jannaschii).